Here is a 118-residue protein sequence, read N- to C-terminus: Small ribosomal subunit protein uS13 (118 aa).

Positions 99-118 are disordered; it reads GQRTRTNARTRKGPRKAIKK.

Belongs to the universal ribosomal protein uS13 family. In terms of assembly, part of the 30S ribosomal subunit. Forms a loose heterodimer with protein S19. Forms two bridges to the 50S subunit in the 70S ribosome.

Its function is as follows. Located at the top of the head of the 30S subunit, it contacts several helices of the 16S rRNA. In the 70S ribosome it contacts the 23S rRNA (bridge B1a) and protein L5 of the 50S subunit (bridge B1b), connecting the 2 subunits; these bridges are implicated in subunit movement. Contacts the tRNAs in the A and P-sites. The polypeptide is Small ribosomal subunit protein uS13 (Xylella fastidiosa (strain M12)).